A 58-amino-acid chain; its full sequence is Large ribosomal subunit protein bL32 (58 aa).

Belongs to the bacterial ribosomal protein bL32 family.

This Anaplasma phagocytophilum (strain HZ) protein is Large ribosomal subunit protein bL32.